A 307-amino-acid polypeptide reads, in one-letter code: tRNA N6-adenosine threonylcarbamoyltransferase (307 aa).

Residues histidine 108 and histidine 112 each contribute to the Fe cation site. Residues 131–135 (IVSGG), aspartate 164, glycine 177, aspartate 181, and asparagine 266 each bind substrate. Fe cation is bound at residue aspartate 290.

This sequence belongs to the KAE1 / TsaD family. Fe(2+) is required as a cofactor.

The protein resides in the cytoplasm. It catalyses the reaction L-threonylcarbamoyladenylate + adenosine(37) in tRNA = N(6)-L-threonylcarbamoyladenosine(37) in tRNA + AMP + H(+). In terms of biological role, required for the formation of a threonylcarbamoyl group on adenosine at position 37 (t(6)A37) in tRNAs that read codons beginning with adenine. Is involved in the transfer of the threonylcarbamoyl moiety of threonylcarbamoyl-AMP (TC-AMP) to the N6 group of A37, together with TsaE and TsaB. TsaD likely plays a direct catalytic role in this reaction. This is tRNA N6-adenosine threonylcarbamoyltransferase from Mycoplasmopsis synoviae (strain 53) (Mycoplasma synoviae).